The chain runs to 525 residues: MTDNIHKHRILILDFGSQYTQLVARRVRELGVYCELWAWDVTEAQIREFNPSGIILSGGPESTTEENSPRAPQYVFEAGVPVFGVCYGMQTMAMQLGGHVEGSNEREFGYAQVEVLTDSALIRGIEDSLTADGKPLLDVWMSHGDKVTAIPSDFVTVASTESCPFAIMANEEKRFYGVQFHPEVTHTRQGMRMLERFVRDICQCEALWTPAKIIDDAVARIREQVGDDKVILGLSGGVDSSVTAMLLHRAIGKNLTCVFVDNGLLRLNEAEQVMDMFGDHFGLNIVHVPAEDRFLSALAGENDPEAKRKIIGRVFVEVFDEEALKLEDVKWLAQGTIYPDVIESAASATGKAHVIKSHHNVGGLPKEMKMGLVEPLKELFKDEVRKIGLELGLPYDMLYRHPFPGPGLGVRVLGEVKKEYCDLLRRADAIFIEELRKADLYDKVSQAFTVFLPVRSVGVMGDGRKYDWVVSLRAVETIDFMTAHWAHLPYGFLGRVSNRIINEVNGISRVVYDISGKPPATIEWE.

In terms of domain architecture, Glutamine amidotransferase type-1 spans 9–207 (RILILDFGSQ…VRDICQCEAL (199 aa)). The Nucleophile role is filled by Cys86. Active-site residues include His181 and Glu183. The 193-residue stretch at 208–400 (WTPAKIIDDA…LGLPYDMLYR (193 aa)) folds into the GMPS ATP-PPase domain. Residue 235–241 (SGGVDSS) participates in ATP binding.

In terms of assembly, homodimer.

It carries out the reaction XMP + L-glutamine + ATP + H2O = GMP + L-glutamate + AMP + diphosphate + 2 H(+). Its pathway is purine metabolism; GMP biosynthesis; GMP from XMP (L-Gln route): step 1/1. Catalyzes the synthesis of GMP from XMP. In Salmonella arizonae (strain ATCC BAA-731 / CDC346-86 / RSK2980), this protein is GMP synthase [glutamine-hydrolyzing].